The following is a 151-amino-acid chain: MQEIKMKTLSAGIIFMTEDKDLFMGRVTGSRKTGMMAHRWDIPKGRVENSDLSALDAARRECLEETGFSNYNPDLLEDLGVFKYSSNKDLQLFYYTIPVEHEMFRNCRCESYFENKDGVMIPEMDAFALIPRTQWQYVMGPSLYRIMNNLF.

The region spanning 6-143 (MKTLSAGIIF…QWQYVMGPSL (138 aa)) is the Nudix hydrolase domain.

This is an uncharacterized protein from Escherichia coli (Bacteriophage T4).